Here is a 175-residue protein sequence, read N- to C-terminus: Adenine phosphoribosyltransferase (175 aa).

The protein belongs to the purine/pyrimidine phosphoribosyltransferase family. Homodimer.

The protein localises to the cytoplasm. It carries out the reaction AMP + diphosphate = 5-phospho-alpha-D-ribose 1-diphosphate + adenine. It functions in the pathway purine metabolism; AMP biosynthesis via salvage pathway; AMP from adenine: step 1/1. Its function is as follows. Catalyzes a salvage reaction resulting in the formation of AMP, that is energically less costly than de novo synthesis. This chain is Adenine phosphoribosyltransferase, found in Caldicellulosiruptor bescii (strain ATCC BAA-1888 / DSM 6725 / KCTC 15123 / Z-1320) (Anaerocellum thermophilum).